Reading from the N-terminus, the 113-residue chain is Endoribonuclease SymE (113 aa).

The SpoVT-AbrB domain maps to 29–74; that stretch reads SRYPDYSRIPAITLKGQWLEAAGFATGTAVDVKVMEGCIVLTAQPA.

The protein belongs to the SymE family.

It localises to the cytoplasm. Functionally, involved in the degradation and recycling of damaged RNA. It is itself a target for degradation by the ATP-dependent protease Lon. The polypeptide is Endoribonuclease SymE (Shigella flexneri serotype 5b (strain 8401)).